The chain runs to 166 residues: Ribosome maturation factor RimM (166 aa).

Positions 95 to 164 (EEEYYAYELV…KKIIVKEELL (70 aa)) constitute a PRC barrel domain.

This sequence belongs to the RimM family. Binds ribosomal protein uS19.

It is found in the cytoplasm. Its function is as follows. An accessory protein needed during the final step in the assembly of 30S ribosomal subunit, possibly for assembly of the head region. Essential for efficient processing of 16S rRNA. May be needed both before and after RbfA during the maturation of 16S rRNA. It has affinity for free ribosomal 30S subunits but not for 70S ribosomes. In Aquifex aeolicus (strain VF5), this protein is Ribosome maturation factor RimM.